We begin with the raw amino-acid sequence, 196 residues long: MANGPNYKIKPRRRREGKTNYYKRYVYVISKQIRFIVRITNKYVIVQIAKIDPKGDIMVASAHSSELTKKFEWKGDENNTPSAYLTGYLAALRAVKKGVTECVADIGLHVPSKGNKVFYAIKGAIDAGLKIPIGDISIENDRIKGEHIAKYAEKLKSENLDLYNKLFSRYLGRGLNPENLPSHFEEILNKIKSSGG.

The protein belongs to the universal ribosomal protein uL18 family. As to quaternary structure, part of the 50S ribosomal subunit. Contacts the 5S and 23S rRNAs.

This is one of the proteins that bind and probably mediate the attachment of the 5S RNA into the large ribosomal subunit, where it forms part of the central protuberance. The polypeptide is Large ribosomal subunit protein uL18 (Saccharolobus islandicus (strain L.S.2.15 / Lassen #1) (Sulfolobus islandicus)).